A 550-amino-acid polypeptide reads, in one-letter code: Formate--tetrahydrofolate ligase (550 aa).

An ATP-binding site is contributed by 62-69 (TPAGEGKS).

The protein belongs to the formate--tetrahydrofolate ligase family.

It catalyses the reaction (6S)-5,6,7,8-tetrahydrofolate + formate + ATP = (6R)-10-formyltetrahydrofolate + ADP + phosphate. It participates in one-carbon metabolism; tetrahydrofolate interconversion. The chain is Formate--tetrahydrofolate ligase from Corynebacterium diphtheriae (strain ATCC 700971 / NCTC 13129 / Biotype gravis).